Reading from the N-terminus, the 313-residue chain is tRNA dimethylallyltransferase (313 aa).

Residue Gly-11–Ser-18 coordinates ATP. Thr-13–Ser-18 contacts substrate. Interaction with substrate tRNA regions lie at residues Asp-36–Thr-39, Gln-160–Arg-164, and Arg-244–Arg-249.

Belongs to the IPP transferase family. As to quaternary structure, monomer. Mg(2+) is required as a cofactor.

It carries out the reaction adenosine(37) in tRNA + dimethylallyl diphosphate = N(6)-dimethylallyladenosine(37) in tRNA + diphosphate. Functionally, catalyzes the transfer of a dimethylallyl group onto the adenine at position 37 in tRNAs that read codons beginning with uridine, leading to the formation of N6-(dimethylallyl)adenosine (i(6)A). The polypeptide is tRNA dimethylallyltransferase (Bordetella pertussis (strain Tohama I / ATCC BAA-589 / NCTC 13251)).